Reading from the N-terminus, the 403-residue chain is Chorismate synthase (403 aa).

2 residues coordinate NADP(+): R40 and R46. Residues 140-142 (RSS) and 261-262 (QA) each bind FMN. Positions 277–298 (RRGSEAHDEMVRTDEGVDRETN) are enriched in basic and acidic residues. Residues 277 to 307 (RRGSEAHDEMVRTDEGVDRETNRAGGLEGGM) are disordered. Residues G305, 320 to 324 (KPIST), and R346 contribute to the FMN site.

This sequence belongs to the chorismate synthase family. Homotetramer. FMNH2 is required as a cofactor.

It carries out the reaction 5-O-(1-carboxyvinyl)-3-phosphoshikimate = chorismate + phosphate. The protein operates within metabolic intermediate biosynthesis; chorismate biosynthesis; chorismate from D-erythrose 4-phosphate and phosphoenolpyruvate: step 7/7. Catalyzes the anti-1,4-elimination of the C-3 phosphate and the C-6 proR hydrogen from 5-enolpyruvylshikimate-3-phosphate (EPSP) to yield chorismate, which is the branch point compound that serves as the starting substrate for the three terminal pathways of aromatic amino acid biosynthesis. This reaction introduces a second double bond into the aromatic ring system. This chain is Chorismate synthase, found in Corynebacterium aurimucosum (strain ATCC 700975 / DSM 44827 / CIP 107346 / CN-1) (Corynebacterium nigricans).